The sequence spans 136 residues: Large ribosomal subunit protein uL16c (136 aa).

The segment at 1–20 is disordered; that stretch reads MLSPKRTRFRKQHRGRMKGK.

The protein belongs to the universal ribosomal protein uL16 family. In terms of assembly, part of the 50S ribosomal subunit.

It localises to the plastid. Its subcellular location is the chloroplast. The sequence is that of Large ribosomal subunit protein uL16c from Agrostis stolonifera (Creeping bentgrass).